Here is a 68-residue protein sequence, read N- to C-terminus: P21 prophage-derived head-stabilizing protein (68 aa).

This sequence belongs to the lambda phage gpW family.

In Escherichia coli O6:H1 (strain CFT073 / ATCC 700928 / UPEC), this protein is P21 prophage-derived head-stabilizing protein.